We begin with the raw amino-acid sequence, 607 residues long: Chaperone protein DnaK (607 aa).

Thr-174 carries the post-translational modification Phosphothreonine; by autocatalysis. The segment at 577 to 607 (GYTASGPQGGPNPGGGQSGPDGNVNTDYKVY) is disordered. The span at 583-595 (PQGGPNPGGGQSG) shows a compositional bias: gly residues.

The protein belongs to the heat shock protein 70 family.

In terms of biological role, acts as a chaperone. The chain is Chaperone protein DnaK from Caldicellulosiruptor bescii (strain ATCC BAA-1888 / DSM 6725 / KCTC 15123 / Z-1320) (Anaerocellum thermophilum).